Here is a 1541-residue protein sequence, read N- to C-terminus: Multiple epidermal growth factor-like domains protein 6 (1541 aa).

Residues 1-30 form the signal peptide; that stretch reads MSFLEEARAAGRAVVLALVLLLLPAVPVGA. An EMI domain is found at 44-125; sequence MPHVCAEQEL…QQPDEEGCLS (82 aa). 15 disulfides stabilise this stretch: Cys48–Cys111, Cys77–Cys83, Cys110–Cys123, Cys128–Cys139, Cys133–Cys147, Cys149–Cys158, Cys165–Cys176, Cys172–Cys185, Cys187–Cys200, Cys242–Cys255, Cys248–Cys268, Cys270–Cys283, Cys289–Cys300, Cys296–Cys309, and Cys311–Cys324. Residues 124–159 enclose the EGF-like 1 domain; it reads LSAECSASLCFHGGRCVPGSAQPCHCPPGFQGPRCQ. One can recognise an EGF-like 2; calcium-binding domain in the interval 161-201; the sequence is DVDECRTHNGGCQHRCVNTPGSYLCECKPGFRLHTDSRTCL. 2 consecutive EGF-like domains span residues 206–242 and 238–284; these read CALG…GRHC and DGRH…KACE. N-linked (GlcNAc...) asparagine glycosylation occurs at Asn252. One can recognise an EGF-like 5; calcium-binding domain in the interval 285–325; that stretch reads DVDECAAGLAQCAHGCLNTQGSFKCVCHAGYELGADGRQCY. 2 consecutive EGF-like domains span residues 335–370 and 375–411; these read CEAN…QRTC and DCAD…CGCE. The EGF-like 8; calcium-binding domain occupies 412-452; the sequence is DVDECASSRGGCEHHCTNLAGSFQCSCEAGYRLHEDRRGCS. Intrachain disulfides connect Cys416–Cys427, Cys423–Cys436, Cys438–Cys451, Cys520–Cys533, Cys527–Cys540, Cys542–Cys551, Cys564–Cys576, Cys570–Cys583, Cys585–Cys594, Cys607–Cys619, Cys613–Cys626, and Cys628–Cys637. 19 EGF-like domains span residues 516–552, 560–595, 603–638, 736–770, 783–814, 822–857, 865–901, 909–944, 955–987, 995–1030, 1038–1073, 1081–1116, 1124–1159, 1211–1246, 1254–1289, 1297–1332, 1345–1375, 1383–1418, and 1469–1504; these read FGHD…LICN, FGKN…TNCE, YGKH…RFCH, FGVN…EDCE, QEIC…SRCQ, YGPS…FSCQ, WGPD…PRCE, FGPG…TFCE, DCRS…PRCA, YGHN…PSCL, YGDN…LACE, VRAG…DKCQ, FGEA…SGCE, YGPG…TDCN, FGPN…VRCE, FGVG…RHCE, HLEC…QACE, HGAG…HFCE, and FGPS…PTCR. Asn739 carries N-linked (GlcNAc...) asparagine glycosylation. 15 disulfide bridges follow: Cys740-Cys751, Cys744-Cys758, Cys760-Cys769, Cys786-Cys795, Cys789-Cys802, Cys804-Cys813, Cys826-Cys838, Cys832-Cys845, Cys847-Cys856, Cys869-Cys882, Cys873-Cys889, Cys891-Cys900, Cys913-Cys925, Cys919-Cys932, and Cys934-Cys943. Cystine bridges form between Cys999-Cys1011, Cys1005-Cys1018, Cys1020-Cys1029, Cys1042-Cys1054, Cys1048-Cys1061, Cys1063-Cys1072, Cys1085-Cys1097, Cys1091-Cys1104, Cys1106-Cys1115, Cys1128-Cys1140, Cys1134-Cys1147, Cys1149-Cys1158, Cys1215-Cys1227, Cys1221-Cys1234, Cys1236-Cys1245, Cys1258-Cys1270, Cys1264-Cys1277, Cys1279-Cys1288, Cys1301-Cys1313, Cys1307-Cys1320, Cys1322-Cys1331, Cys1348-Cys1356, Cys1350-Cys1363, Cys1365-Cys1374, Cys1387-Cys1399, Cys1393-Cys1406, Cys1408-Cys1417, Cys1473-Cys1485, Cys1479-Cys1492, and Cys1494-Cys1503. Residues 1509-1541 form a disordered region; that stretch reads LRLPENPSLAQGSAGTLPASSRPTSRSGGPARH. A compositionally biased stretch (polar residues) spans 1516–1535; sequence SLAQGSAGTLPASSRPTSRS.

The protein localises to the secreted. This chain is Multiple epidermal growth factor-like domains protein 6 (MEGF6), found in Homo sapiens (Human).